Here is a 635-residue protein sequence, read N- to C-terminus: tRNA 5-methylaminomethyl-2-thiouridine biosynthesis bifunctional protein MnmC (635 aa).

Residues 1-227 (MSEPIDWLPD…KRSNLQAEFD (227 aa)) are tRNA (mnm(5)s(2)U34)-methyltransferase. The interval 254–635 (IGGGLSGAAV…ALSTERLPAD (382 aa)) is FAD-dependent cmnm(5)s(2)U34 oxidoreductase.

In the N-terminal section; belongs to the methyltransferase superfamily. tRNA (mnm(5)s(2)U34)-methyltransferase family. It in the C-terminal section; belongs to the DAO family. The cofactor is FAD.

It is found in the cytoplasm. It catalyses the reaction 5-aminomethyl-2-thiouridine(34) in tRNA + S-adenosyl-L-methionine = 5-methylaminomethyl-2-thiouridine(34) in tRNA + S-adenosyl-L-homocysteine + H(+). In terms of biological role, catalyzes the last two steps in the biosynthesis of 5-methylaminomethyl-2-thiouridine (mnm(5)s(2)U) at the wobble position (U34) in tRNA. Catalyzes the FAD-dependent demodification of cmnm(5)s(2)U34 to nm(5)s(2)U34, followed by the transfer of a methyl group from S-adenosyl-L-methionine to nm(5)s(2)U34, to form mnm(5)s(2)U34. This is tRNA 5-methylaminomethyl-2-thiouridine biosynthesis bifunctional protein MnmC from Paracidovorax citrulli (strain AAC00-1) (Acidovorax citrulli).